We begin with the raw amino-acid sequence, 254 residues long: Dihydroorotate dehydrogenase B (NAD(+)), electron transfer subunit (254 aa).

The FAD-binding FR-type domain maps to 1–99 (MLQTEMKVIQ…LGPLGKGFDI (99 aa)). FAD contacts are provided by residues 50-53 (RPIS), 67-69 (LYR), and 74-75 (GT). Residues Cys-218, Cys-223, Cys-226, and Cys-241 each contribute to the [2Fe-2S] cluster site.

This sequence belongs to the PyrK family. In terms of assembly, heterotetramer of 2 PyrK and 2 PyrD type B subunits. [2Fe-2S] cluster is required as a cofactor. FAD serves as cofactor.

It functions in the pathway pyrimidine metabolism; UMP biosynthesis via de novo pathway; orotate from (S)-dihydroorotate (NAD(+) route): step 1/1. Functionally, responsible for channeling the electrons from the oxidation of dihydroorotate from the FMN redox center in the PyrD type B subunit to the ultimate electron acceptor NAD(+). The polypeptide is Dihydroorotate dehydrogenase B (NAD(+)), electron transfer subunit (Listeria monocytogenes serovar 1/2a (strain ATCC BAA-679 / EGD-e)).